The sequence spans 135 residues: Large ribosomal subunit protein eL27z (135 aa).

It belongs to the eukaryotic ribosomal protein eL27 family.

The sequence is that of Large ribosomal subunit protein eL27z (RPL27A) from Arabidopsis thaliana (Mouse-ear cress).